The following is a 645-amino-acid chain: DNA mismatch repair protein MutL (645 aa).

Disordered stretches follow at residues 353–381 and 395–420; these read RPENQLGGSVPAAAEPRPTGPDAGEFGPQ and QGEPFARPAGGGSGSGYQYSPRPTTG.

Belongs to the DNA mismatch repair MutL/HexB family.

Its function is as follows. This protein is involved in the repair of mismatches in DNA. It is required for dam-dependent methyl-directed DNA mismatch repair. May act as a 'molecular matchmaker', a protein that promotes the formation of a stable complex between two or more DNA-binding proteins in an ATP-dependent manner without itself being part of a final effector complex. The polypeptide is DNA mismatch repair protein MutL (Pseudomonas syringae pv. tomato (strain ATCC BAA-871 / DC3000)).